The following is a 446-amino-acid chain: MVPQAHGLLLLCFLLQLQGPLGTAVFITQEEAHGVLHRQRRANSLLEELWPGSLERECNEEQCSFEEAREIFKSPERTKQFWIVYSDGDQCASNPCQNGGTCQDHLKSYVCFCLLDFEGRNCEKSKNEQLICANENGDCDQYCRDHVGTKRTCSCHEDYTLQPDEVSCKPKVEYPCGRIPVVEKRNSSSRQGRIVGGNVCPKGECPWQAVLKINGLLLCGAVLLDARWIVTAAHCFDNIRYWGNITVVMGEHDFSEKDGDEQVRRVTQVIMPDKYIRGKINHDIALLRLHRPVTFTDYVVPLCLPEKSFSENTLARIRFSRVSGWGQLLDRGATALELMSIEVPRLMTQDCLEHAKHSSNTPKITENMFCAGYMDGTKDACKGDSGGPHATHYHGTWYLTGVVSWGEGCAAIGHIGVYTRVSQYIDWLVRHMDSKLQVGVFRLPLL.

A signal peptide spans Met-1–Ala-24. Residues Val-25–Arg-41 constitute a propeptide that is removed on maturation. The Gla domain maps to Ala-42–Ser-86. 4-carboxyglutamate occurs at positions 47, 48, 55, 57, 60, 61, 66, 67, 70, and 76. A disulfide bridge connects residues Cys-58 and Cys-63. The EGF-like 1; calcium-binding domain maps to Asp-87 to Glu-123. Cystine bridges form between Cys-91–Cys-102, Cys-96–Cys-111, Cys-113–Cys-122, Cys-132–Cys-143, Cys-139–Cys-153, Cys-155–Cys-168, Cys-176–Cys-303, Cys-200–Cys-205, Cys-219–Cys-235, and Cys-351–Cys-370. An O-linked (Glc...) serine; alternate glycan is attached at Ser-93. Ser-93 carries O-linked (Xyl...) serine; alternate glycosylation. Asp-104 is subject to (3R)-3-hydroxyaspartate. In terms of domain architecture, EGF-like 2 spans Glu-128–Lys-169. Asn-186 is a glycosylation site (N-linked (GlcNAc...) asparagine). The 240-residue stretch at Ile-194–Asp-433 folds into the Peptidase S1 domain. Catalysis depends on His-234, which acts as the Charge relay system. Asn-244 carries N-linked (GlcNAc...) asparagine glycosylation. Residue Asp-283 is the Charge relay system of the active site. Asp-379 is a substrate binding site. Cys-381 and Cys-409 are oxidised to a cystine. The active-site Charge relay system is the Ser-385.

Belongs to the peptidase S1 family. Heterodimer of a light chain and a heavy chain linked by a disulfide bond. Post-translationally, the vitamin K-dependent, enzymatic carboxylation of some glutamate residues allows the modified protein to bind calcium. In terms of processing, the iron and 2-oxoglutarate dependent 3-hydroxylation of aspartate and asparagine is (R) stereospecific within EGF domains. Can be either O-glucosylated or O-xylosylated at Ser-93 by POGLUT1. In terms of tissue distribution, plasma and liver.

It is found in the secreted. It catalyses the reaction Selective cleavage of Arg-|-Ile bond in factor X to form factor Xa.. In terms of biological role, initiates the extrinsic pathway of blood coagulation. Serine protease that circulates in the blood in a zymogen form. Factor VII is converted to factor VIIa by factor Xa, factor XIIa, factor IXa, or thrombin by minor proteolysis. In the presence of tissue factor and calcium ions, factor VIIa then converts factor X to factor Xa by limited proteolysis. Factor VIIa also converts factor IX to factor IXa in the presence of tissue factor and calcium. In Mus musculus (Mouse), this protein is Coagulation factor VII (F7).